Reading from the N-terminus, the 281-residue chain is MAQKIIRVGSIEVANDKPMVLFGGMNVLESRDMAMQVCEEYVKVTEKLGIPYVFKASFDKANRSSVNSYRGPGLEEGMRIFEEIKRTFNVPLITDVHEPHQAAVVAEVCDIIQLPAFLSRQTDLVVAMAKTGAIINIKKAQFLAPQEMKHILTKCEEAGNDQLILCERGSSFGYNNLVVDMLGFGIMKQFEYPILFDVTHALQMPGGRSDSAGGRRAQVLDLAKAGISQNLAGLFLEAHPDPDNAKCDGPCALRLDKLEPFLAQLKSLDELVKSFPIVETA.

Belongs to the KdsA family.

The protein localises to the cytoplasm. The catalysed reaction is D-arabinose 5-phosphate + phosphoenolpyruvate + H2O = 3-deoxy-alpha-D-manno-2-octulosonate-8-phosphate + phosphate. It functions in the pathway carbohydrate biosynthesis; 3-deoxy-D-manno-octulosonate biosynthesis; 3-deoxy-D-manno-octulosonate from D-ribulose 5-phosphate: step 2/3. The protein operates within bacterial outer membrane biogenesis; lipopolysaccharide biosynthesis. The polypeptide is 2-dehydro-3-deoxyphosphooctonate aldolase (Pseudomonas syringae pv. syringae (strain B728a)).